Consider the following 155-residue polypeptide: Basic phospholipase A2 PC1 (155 aa).

The first 21 residues, 1 to 21 (MYPAHLLVLLAVCVSLLGASA), serve as a signal peptide directing secretion. The propeptide occupies 22 to 27 (ISNRPR). 7 disulfides stabilise this stretch: Cys-38-Cys-98, Cys-54-Cys-144, Cys-56-Cys-72, Cys-71-Cys-125, Cys-78-Cys-118, Cys-87-Cys-111, and Cys-105-Cys-116. Residues Tyr-55, Gly-57, and Gly-59 each coordinate Ca(2+). His-75 is a catalytic residue. Residue Asp-76 coordinates Ca(2+). The active site involves Asp-119.

It belongs to the phospholipase A2 family. Group I subfamily. D49 sub-subfamily. Requires Ca(2+) as cofactor. As to expression, expressed by the venom gland.

The protein resides in the secreted. The catalysed reaction is a 1,2-diacyl-sn-glycero-3-phosphocholine + H2O = a 1-acyl-sn-glycero-3-phosphocholine + a fatty acid + H(+). Its function is as follows. Snake venom phospholipase A2 (PLA2) that inhibits neuromuscular transmission by blocking acetylcholine release from the nerve termini. PLA2 catalyzes the calcium-dependent hydrolysis of the 2-acyl groups in 3-sn-phosphoglycerides. In Laticauda colubrina (Yellow-lipped sea krait), this protein is Basic phospholipase A2 PC1.